The primary structure comprises 294 residues: UPF0761 membrane protein MADE_1017605/MADE_1018330 (294 aa).

Transmembrane regions (helical) follow at residues 45–65 (LLSLVPFIMVTFTIMSAFPAF), 99–119 (ASQMSAIGILSLLVVALMLIS), 141–161 (FAIYWMVITLGPMLIGSSVVV), 182–202 (FLLSLVPSGAALLAFAILYMV), 213–233 (AFVGAIVATIAFEITKSGFAL), and 247–267 (ALAVVPILFLWVYLSWIIVLF).

This sequence belongs to the UPF0761 family.

The protein resides in the cell inner membrane. The chain is UPF0761 membrane protein MADE_1017605/MADE_1018330 from Alteromonas mediterranea (strain DSM 17117 / CIP 110805 / LMG 28347 / Deep ecotype).